The following is a 185-amino-acid chain: Peptidyl-tRNA hydrolase (185 aa).

Residue Y15 coordinates tRNA. H20 acts as the Proton acceptor in catalysis. Residues Y64, N66, and N112 each coordinate tRNA.

It belongs to the PTH family. As to quaternary structure, monomer.

It localises to the cytoplasm. The catalysed reaction is an N-acyl-L-alpha-aminoacyl-tRNA + H2O = an N-acyl-L-amino acid + a tRNA + H(+). In terms of biological role, hydrolyzes ribosome-free peptidyl-tRNAs (with 1 or more amino acids incorporated), which drop off the ribosome during protein synthesis, or as a result of ribosome stalling. Its function is as follows. Catalyzes the release of premature peptidyl moieties from peptidyl-tRNA molecules trapped in stalled 50S ribosomal subunits, and thus maintains levels of free tRNAs and 50S ribosomes. The protein is Peptidyl-tRNA hydrolase of Porphyromonas gingivalis (strain ATCC BAA-308 / W83).